The chain runs to 219 residues: Ras-related protein RABA5d (219 aa).

At serine 2 the chain carries N-acetylserine. 19-26 (GDSAVGKS) serves as a coordination point for GTP. The Effector region motif lies at 41–49 (SKATIGVEF). Residues 67–71 (DTAGQ), 125–128 (NKCD), and 155–156 (SA) each bind GTP. S-geranylgeranyl cysteine attachment occurs at residues cysteine 215 and cysteine 216.

Belongs to the small GTPase superfamily. Rab family.

The protein localises to the cell membrane. In terms of biological role, intracellular vesicle trafficking and protein transport. The sequence is that of Ras-related protein RABA5d (RABA5D) from Arabidopsis thaliana (Mouse-ear cress).